A 572-amino-acid polypeptide reads, in one-letter code: O-fucosyltransferase 16 (572 aa).

A helical; Signal-anchor for type II membrane protein membrane pass occupies residues 17–37 (LLPLVIAVSLSLLILFAFLSF). 2 N-linked (GlcNAc...) asparagine glycosylation sites follow: N92 and N136. Residue 274-276 (HLR) participates in substrate binding. N-linked (GlcNAc...) asparagine glycosylation is found at N446 and N506. A disordered region spans residues 498 to 572 (ESRKLGKKNK…EPELEAMLSD (75 aa)). Over residues 521 to 541 (DQTEEDDPDWSEPDYEEEQSD) the composition is skewed to acidic residues. The N-linked (GlcNAc...) asparagine glycan is linked to N549. The span at 554–566 (DYDDPSTSDEPEL) shows a compositional bias: acidic residues.

This sequence belongs to the glycosyltransferase GT106 family.

The protein resides in the membrane. The protein operates within glycan metabolism. The polypeptide is O-fucosyltransferase 16 (Arabidopsis thaliana (Mouse-ear cress)).